The chain runs to 85 residues: Small ribosomal subunit protein uS17 (85 aa).

This sequence belongs to the universal ribosomal protein uS17 family. In terms of assembly, part of the 30S ribosomal subunit.

Functionally, one of the primary rRNA binding proteins, it binds specifically to the 5'-end of 16S ribosomal RNA. This Agathobacter rectalis (strain ATCC 33656 / DSM 3377 / JCM 17463 / KCTC 5835 / VPI 0990) (Eubacterium rectale) protein is Small ribosomal subunit protein uS17.